A 1097-amino-acid chain; its full sequence is DNA-directed RNA polymerase subunit beta (1097 aa).

The tract at residues 1073–1097 (DINPRRNTPSRPTYESLGTSEYEED) is disordered. Residues 1077 to 1091 (RRNTPSRPTYESLGT) show a composition bias toward polar residues.

The protein belongs to the RNA polymerase beta chain family. As to quaternary structure, in cyanobacteria the RNAP catalytic core is composed of 2 alpha, 1 beta, 1 beta', 1 gamma and 1 omega subunit. When a sigma factor is associated with the core the holoenzyme is formed, which can initiate transcription.

The catalysed reaction is RNA(n) + a ribonucleoside 5'-triphosphate = RNA(n+1) + diphosphate. Its function is as follows. DNA-dependent RNA polymerase catalyzes the transcription of DNA into RNA using the four ribonucleoside triphosphates as substrates. The polypeptide is DNA-directed RNA polymerase subunit beta (Prochlorococcus marinus (strain MIT 9312)).